A 540-amino-acid chain; its full sequence is Glucose-6-phosphate isomerase (540 aa).

The Proton donor role is filled by Glu350. Catalysis depends on residues His381 and Lys503.

Belongs to the GPI family.

It localises to the cytoplasm. The enzyme catalyses alpha-D-glucose 6-phosphate = beta-D-fructose 6-phosphate. It functions in the pathway carbohydrate biosynthesis; gluconeogenesis. Its pathway is carbohydrate degradation; glycolysis; D-glyceraldehyde 3-phosphate and glycerone phosphate from D-glucose: step 2/4. In terms of biological role, catalyzes the reversible isomerization of glucose-6-phosphate to fructose-6-phosphate. The polypeptide is Glucose-6-phosphate isomerase (Burkholderia ambifaria (strain MC40-6)).